A 230-amino-acid chain; its full sequence is Ribonuclease 3 (230 aa).

One can recognise an RNase III domain in the interval 10–133 (DPRLQSRIGY…IIGAIYVDSN (124 aa)). E46 contributes to the Mg(2+) binding site. D50 is a catalytic residue. Mg(2+) is bound by residues D119 and E122. E122 is an active-site residue. The 70-residue stretch at 161 to 230 (DPKSRLQEYL…AAEILKLLEQ (70 aa)) folds into the DRBM domain.

It belongs to the ribonuclease III family. Homodimer. Mg(2+) serves as cofactor.

It localises to the cytoplasm. It catalyses the reaction Endonucleolytic cleavage to 5'-phosphomonoester.. Digests double-stranded RNA. Involved in the processing of primary rRNA transcript to yield the immediate precursors to the large and small rRNAs (23S and 16S). Processes some mRNAs, and tRNAs when they are encoded in the rRNA operon. Processes pre-crRNA and tracrRNA of type II CRISPR loci if present in the organism. In Acinetobacter baylyi (strain ATCC 33305 / BD413 / ADP1), this protein is Ribonuclease 3.